A 437-amino-acid chain; its full sequence is UDP-N-acetylmuramate--L-alanine ligase (437 aa).

108–114 (GAHGKTS) contributes to the ATP binding site.

This sequence belongs to the MurCDEF family.

The protein resides in the cytoplasm. It carries out the reaction UDP-N-acetyl-alpha-D-muramate + L-alanine + ATP = UDP-N-acetyl-alpha-D-muramoyl-L-alanine + ADP + phosphate + H(+). Its pathway is cell wall biogenesis; peptidoglycan biosynthesis. Cell wall formation. The chain is UDP-N-acetylmuramate--L-alanine ligase from Staphylococcus aureus (strain JH9).